The sequence spans 417 residues: Serine--tRNA ligase (417 aa).

L-serine is bound at residue 225 to 227 (TLE). 256–258 (RQE) is a binding site for ATP. E279 contributes to the L-serine binding site. 343 to 346 (EVSS) contributes to the ATP binding site. Position 379 (T379) interacts with L-serine.

The protein belongs to the class-II aminoacyl-tRNA synthetase family. Type-1 seryl-tRNA synthetase subfamily. As to quaternary structure, homodimer. The tRNA molecule binds across the dimer.

Its subcellular location is the cytoplasm. It catalyses the reaction tRNA(Ser) + L-serine + ATP = L-seryl-tRNA(Ser) + AMP + diphosphate + H(+). It carries out the reaction tRNA(Sec) + L-serine + ATP = L-seryl-tRNA(Sec) + AMP + diphosphate + H(+). It participates in aminoacyl-tRNA biosynthesis; selenocysteinyl-tRNA(Sec) biosynthesis; L-seryl-tRNA(Sec) from L-serine and tRNA(Sec): step 1/1. Catalyzes the attachment of serine to tRNA(Ser). Is also able to aminoacylate tRNA(Sec) with serine, to form the misacylated tRNA L-seryl-tRNA(Sec), which will be further converted into selenocysteinyl-tRNA(Sec). The polypeptide is Serine--tRNA ligase (Mycoplasma genitalium (strain ATCC 33530 / DSM 19775 / NCTC 10195 / G37) (Mycoplasmoides genitalium)).